Consider the following 431-residue polypeptide: Bone morphogenetic protein 7 (431 aa).

The signal sequence occupies residues 1 to 29; it reads MHVRSLRAAAPHSFVALWAPLFLLRSALA. Positions 30 to 292 are excised as a propeptide; sequence DFSLDNEVHS…ATEVHFRSIR (263 aa). N-linked (GlcNAc...) asparagine glycosylation is found at Asn187, Asn302, Asn321, and Asn372. The interval 291-311 is disordered; sequence IRSTGSKQRSQNRSKTPKNQE. 3 cysteine pairs are disulfide-bonded: Cys330–Cys396, Cys359–Cys428, and Cys363–Cys430.

This sequence belongs to the TGF-beta family. In terms of assembly, homodimer; disulfide-linked. Interacts with SOSTDC1. Interacts with TWSG1. Interacts with FBN1 (via N-terminal domain) and FBN2. Interacts with type I receptor ACVR1. Interacts with type II receptor ACVR2A. Interacts with NOG; this interaction inhibits canonical BMP signaling. Interacts with SCUBE3. Interacts with ERFE; the interaction inhibits BMP-induced transcription of HAMP. Interacts with TGFBR3. Post-translationally, several N-termini starting at positions 293, 300, 315 and 316 have been identified by direct sequencing resulting in secretion of different mature forms. Expressed in the kidney and bladder. Lower levels seen in the brain.

It localises to the secreted. Growth factor of the TGF-beta superfamily that plays important role in various biological processes, including embryogenesis, hematopoiesis, neurogenesis and skeletal morphogenesis. Initiates the canonical BMP signaling cascade by associating with type I receptor ACVR1 and type II receptor ACVR2A. Once all three components are bound together in a complex at the cell surface, ACVR2A phosphorylates and activates ACVR1. In turn, ACVR1 propagates signal by phosphorylating SMAD1/5/8 that travel to the nucleus and act as activators and repressors of transcription of target genes. For specific functions such as growth cone collapse in developing spinal neurons and chemotaxis of monocytes, also uses BMPR2 as type II receptor. Can also signal through non-canonical pathways such as P38 MAP kinase signaling cascade that promotes brown adipocyte differentiation through activation of target genes, including members of the SOX family of transcription factors. Promotes the expression of HAMP, this is repressed by its interaction with ERFE. The polypeptide is Bone morphogenetic protein 7 (BMP7) (Homo sapiens (Human)).